Here is a 104-residue protein sequence, read N- to C-terminus: Circadian clock oscillator protein KaiB (104 aa).

This sequence belongs to the KaiB family. The KaiABC complex composition changes during the circadian cycle to control KaiC phosphorylation. Complexes KaiC(6), KaiA(2-4):KaiC(6), KaiB(6):KaiC(6) and KaiC(6):KaiB(6):KaiA(12) are among the most important forms, many form cooperatively. Undergoes a major conformational rearrangment; in the free state forms homotetramers as a dimer of dimers. When bound to the CI domain of KaiC switches to a monomeric thioredoxin-fold (KaiB(fs)). KaiB(fs) binds CikA, leading it to dephosphorylate phospho-RpaA.

In terms of biological role, key component of the KaiABC oscillator complex, which constitutes the main circadian regulator in cyanobacteria. Complex composition changes during the circadian cycle to control KaiC phosphorylation. KaiA stimulates KaiC autophosphorylation, while KaiB sequesters KaiA, leading to KaiC autodephosphorylation. Phospho-Ser-431 KaiC accumulation triggers binding of KaiB to form the KaiB(6):KaiC(6) complex, leading to changes in output regulators CikA and SasA. KaiB switches to a thioredoxin-like fold (KaiB(fs)) when bound to KaiC. KaiB(6):KaiC(6) formation exposes a site for KaiA binding that sequesters KaiA from KaiC, making the KaiC(6):KaiB(6):KaiA(12) complex that results in KaiC autodephosphorylation. A metamorphic protein which reversibly switches between an inactive tetrameric fold and a rare, thioredoxin-like monomeric fold (KaiB(fs)). KaiB(fs) binds phospho-KaiC, KaiA and CikA. KaiA and CikA compete for binding to KaiB(fs), and KaiB(fs) and SasA compete for binding to KaiC, thus the clock oscillator and output signal pathway are tightly coupled. This chain is Circadian clock oscillator protein KaiB, found in Microcystis aeruginosa (strain NIES-843 / IAM M-2473).